Here is a 453-residue protein sequence, read N- to C-terminus: UDP-N-acetylmuramate--L-alanine ligase (453 aa).

Position 112 to 118 (112 to 118) interacts with ATP; sequence GTHGKTT.

It belongs to the MurCDEF family.

Its subcellular location is the cytoplasm. It catalyses the reaction UDP-N-acetyl-alpha-D-muramate + L-alanine + ATP = UDP-N-acetyl-alpha-D-muramoyl-L-alanine + ADP + phosphate + H(+). The protein operates within cell wall biogenesis; peptidoglycan biosynthesis. In terms of biological role, cell wall formation. The protein is UDP-N-acetylmuramate--L-alanine ligase of Lawsonia intracellularis (strain PHE/MN1-00).